Reading from the N-terminus, the 984-residue chain is UPF0592 protein YDL073W (984 aa).

A disordered region spans residues 675-712; the sequence is KNHKIMDGYEGGQENEDNDEDSEDSGSHKNKRKEGNSS. Positions 687–698 are enriched in acidic residues; it reads QENEDNDEDSED.

Belongs to the UPF0592 family.

This Saccharomyces cerevisiae (strain ATCC 204508 / S288c) (Baker's yeast) protein is UPF0592 protein YDL073W.